We begin with the raw amino-acid sequence, 254 residues long: Glucosamine-6-phosphate deaminase (254 aa).

Aspartate 65 acts as the Proton acceptor; for enolization step in catalysis. The active-site For ring-opening step is asparagine 134. Histidine 136 functions as the Proton acceptor; for ring-opening step in the catalytic mechanism. Glutamate 141 (for ring-opening step) is an active-site residue.

It belongs to the glucosamine/galactosamine-6-phosphate isomerase family. NagB subfamily.

It catalyses the reaction alpha-D-glucosamine 6-phosphate + H2O = beta-D-fructose 6-phosphate + NH4(+). It participates in amino-sugar metabolism; N-acetylneuraminate degradation; D-fructose 6-phosphate from N-acetylneuraminate: step 5/5. In terms of biological role, catalyzes the reversible isomerization-deamination of glucosamine 6-phosphate (GlcN6P) to form fructose 6-phosphate (Fru6P) and ammonium ion. In Corynebacterium aurimucosum (strain ATCC 700975 / DSM 44827 / CIP 107346 / CN-1) (Corynebacterium nigricans), this protein is Glucosamine-6-phosphate deaminase.